The chain runs to 119 residues: uncharacterized protein (119 aa).

This is an uncharacterized protein from Shigella flexneri.